A 263-amino-acid chain; its full sequence is Microtubule-associated protein RP/EB family member 1 (263 aa).

The Calponin-homology (CH) domain maps to 14–116 (NLSRHDMLAW…FVQWFKKFFD (103 aa)). The region spanning 180 to 250 (KKAAGDDESA…LYATDEGFVI (71 aa)) is the EB1 C-terminal domain.

Belongs to the MAPRE family.

Its subcellular location is the cytoplasm. It localises to the cytoskeleton. The protein localises to the microtubule organizing center. The protein resides in the centrosome. It is found in the golgi apparatus. Its subcellular location is the spindle. It localises to the spindle pole. Its function is as follows. Plus-end tracking protein (+TIP) that binds to the plus-end of microtubules and regulates the dynamics of the microtubule cytoskeleton. Promotes cytoplasmic microtubule nucleation and elongation. Involved in mitotic spindle positioning by stabilizing microtubules and promoting dynamic connection between astral microtubules and the cortex during mitotic chromosome segregation. In Coturnix coturnix (Common quail), this protein is Microtubule-associated protein RP/EB family member 1 (MAPRE1).